We begin with the raw amino-acid sequence, 300 residues long: Geranylgeranyl pyrophosphate synthase (300 aa).

Met1 is modified (N-acetylmethionine). Lys25, Arg28, and His57 together coordinate isopentenyl diphosphate. Mg(2+)-binding residues include Asp64 and Asp68. A dimethylallyl diphosphate-binding site is contributed by Arg73. Arg74 provides a ligand contact to isopentenyl diphosphate. Residues Lys151, Thr152, Gln185, Lys202, and Lys212 each contribute to the dimethylallyl diphosphate site.

This sequence belongs to the FPP/GGPP synthase family. Homohexamer; trimer of homodimers. The cofactor is Mg(2+).

The protein localises to the cytoplasm. It is found in the perinuclear region. Its subcellular location is the myofibril. The protein resides in the sarcomere. It localises to the z line. It catalyses the reaction isopentenyl diphosphate + dimethylallyl diphosphate = (2E)-geranyl diphosphate + diphosphate. It carries out the reaction isopentenyl diphosphate + (2E)-geranyl diphosphate = (2E,6E)-farnesyl diphosphate + diphosphate. The catalysed reaction is isopentenyl diphosphate + (2E,6E)-farnesyl diphosphate = (2E,6E,10E)-geranylgeranyl diphosphate + diphosphate. It participates in isoprenoid biosynthesis; farnesyl diphosphate biosynthesis; farnesyl diphosphate from geranyl diphosphate and isopentenyl diphosphate: step 1/1. Its pathway is isoprenoid biosynthesis; geranyl diphosphate biosynthesis; geranyl diphosphate from dimethylallyl diphosphate and isopentenyl diphosphate: step 1/1. The protein operates within isoprenoid biosynthesis; geranylgeranyl diphosphate biosynthesis; geranylgeranyl diphosphate from farnesyl diphosphate and isopentenyl diphosphate: step 1/1. Its function is as follows. Catalyzes the trans-addition of the three molecules of IPP onto DMAPP to form geranylgeranyl pyrophosphate, an important precursor of carotenoids and geranylated proteins. This Rattus norvegicus (Rat) protein is Geranylgeranyl pyrophosphate synthase (Ggps1).